Here is a 208-residue protein sequence, read N- to C-terminus: MTNWNYQQTNFVTSAPDIRHLPPDTGIEVAFAGRSNAGKSSALNTLTNQRSLARTSKTPGRTQLINLFEVAEGKRLVDLPGYGYAEVPEEVKLKWQKALGEYLEKRQCLKGLVVLMDIRHPLKDLDQQMIHWAVASEIPVLVLLTKSDKLASGARKAQLKMVREAALAFNGDVQIETFSSLKKQGVDVLRQKLDSWYNGLEPAVEAEE.

The region spanning Thr-25–Gly-199 is the EngB-type G domain. GTP is bound by residues Gly-33–Ser-40, Gly-60–Leu-64, Asp-78–Gly-81, Thr-145–Asp-148, and Phe-178–Ser-180. Residues Ser-40 and Thr-62 each coordinate Mg(2+).

The protein belongs to the TRAFAC class TrmE-Era-EngA-EngB-Septin-like GTPase superfamily. EngB GTPase family. Mg(2+) serves as cofactor.

Necessary for normal cell division and for the maintenance of normal septation. This chain is Probable GTP-binding protein EngB, found in Enterobacter sp. (strain 638).